Reading from the N-terminus, the 204-residue chain is Phosphoheptose isomerase (204 aa).

Residues 38 to 199 (MAVALARGGK…LFEAVMELGP (162 aa)) form the SIS domain. 53 to 55 (NGG) lines the substrate pocket. Zn(2+) is bound by residues His62 and Glu66. Substrate is bound by residues Glu66, 95–96 (ND), 121–123 (STS), Ser126, and Gln172. The Zn(2+) site is built by Gln172 and His180.

The protein belongs to the SIS family. GmhA subfamily. As to quaternary structure, homotetramer. It depends on Zn(2+) as a cofactor.

It is found in the cytoplasm. It carries out the reaction 2 D-sedoheptulose 7-phosphate = D-glycero-alpha-D-manno-heptose 7-phosphate + D-glycero-beta-D-manno-heptose 7-phosphate. The protein operates within carbohydrate biosynthesis; D-glycero-D-manno-heptose 7-phosphate biosynthesis; D-glycero-alpha-D-manno-heptose 7-phosphate and D-glycero-beta-D-manno-heptose 7-phosphate from sedoheptulose 7-phosphate: step 1/1. Functionally, catalyzes the isomerization of sedoheptulose 7-phosphate in D-glycero-D-manno-heptose 7-phosphate. In Solidesulfovibrio magneticus (strain ATCC 700980 / DSM 13731 / RS-1) (Desulfovibrio magneticus), this protein is Phosphoheptose isomerase.